A 203-amino-acid polypeptide reads, in one-letter code: High frequency lysogenization protein HflD homolog (203 aa).

Belongs to the HflD family.

It localises to the cytoplasm. The protein resides in the cell inner membrane. This is High frequency lysogenization protein HflD homolog from Aeromonas salmonicida (strain A449).